Reading from the N-terminus, the 431-residue chain is Adenylosuccinate synthetase (431 aa).

Residues 12–18 and 40–42 contribute to the GTP site; these read GDEGKGK and GHT. Asp-13 (proton acceptor) is an active-site residue. Mg(2+) contacts are provided by Asp-13 and Gly-40. IMP is bound by residues 13-16, 38-41, Thr-129, Arg-143, Gln-224, Thr-239, and Arg-303; these read DEGK and NAGH. The active-site Proton donor is His-41. Residue 299 to 305 participates in substrate binding; that stretch reads VTTGRAR. GTP contacts are provided by residues Arg-305, 331-333, and 413-415; these read KLD and GVG.

Belongs to the adenylosuccinate synthetase family. Homodimer. The cofactor is Mg(2+).

Its subcellular location is the cytoplasm. It catalyses the reaction IMP + L-aspartate + GTP = N(6)-(1,2-dicarboxyethyl)-AMP + GDP + phosphate + 2 H(+). Its pathway is purine metabolism; AMP biosynthesis via de novo pathway; AMP from IMP: step 1/2. Functionally, plays an important role in the de novo pathway of purine nucleotide biosynthesis. Catalyzes the first committed step in the biosynthesis of AMP from IMP. The chain is Adenylosuccinate synthetase from Mycolicibacterium vanbaalenii (strain DSM 7251 / JCM 13017 / BCRC 16820 / KCTC 9966 / NRRL B-24157 / PYR-1) (Mycobacterium vanbaalenii).